Here is a 106-residue protein sequence, read N- to C-terminus: UPF0145 protein Csac_0771 (106 aa).

Belongs to the UPF0145 family.

The chain is UPF0145 protein Csac_0771 from Caldicellulosiruptor saccharolyticus (strain ATCC 43494 / DSM 8903 / Tp8T 6331).